Reading from the N-terminus, the 80-residue chain is MKLVLAIVVILMLLSLSTGAEMSDNHASRSATALRDRLLSPKASICYGTGGRCTKDKHCCGWLCCGGPSVGCVVSVAPCK.

Residues 1–19 (MKLVLAIVVILMLLSLSTG) form the signal peptide. The propeptide occupies 20–42 (AEMSDNHASRSATALRDRLLSPK). Cystine bridges form between Cys46–Cys60, Cys53–Cys65, Cys59–Cys72, and Cys64–Cys79.

This sequence belongs to the conotoxin I3 superfamily. As to expression, expressed by the venom duct.

The protein localises to the secreted. The sequence is that of Conotoxin Ca11.3 from Conus caracteristicus (Characteristic cone).